A 202-amino-acid polypeptide reads, in one-letter code: Alpha-1-acid glycoprotein (202 aa).

Residues 1–18 (MALLWALAVLSHLPLLDA) form the signal peptide. 5 N-linked (GlcNAc...) asparagine glycosylation sites follow: Asn34, Asn57, Asn94, Asn104, and Asn136. The cysteines at positions 91 and 184 are disulfide-linked.

It belongs to the calycin superfamily. Lipocalin family.

Its subcellular location is the secreted. Functionally, functions as a transport protein in the blood stream. Binds various ligands in the interior of its beta-barrel domain. Appears to function in modulating the activity of the immune system during the acute-phase reaction. This chain is Alpha-1-acid glycoprotein (ORM1), found in Bos taurus (Bovine).